We begin with the raw amino-acid sequence, 999 residues long: Ulvan lyase, long isoform (999 aa).

The first 21 residues, 1–21 (MKCLKTLLVSTTLLTAFSLNA), serve as a signal peptide directing secretion. Position 126–127 (126–127 (SH)) interacts with substrate. The active-site Proton donor/acceptor is the H127. The Ca(2+) site is built by D189, D199, and K201. Substrate-binding residues include Y280 and R297. Residues D300, D303, and Y305 each contribute to the Ca(2+) site. Y361 serves as a coordination point for substrate.

This sequence belongs to the polysaccharide lyase 24 family.

Ulvan lyase involved in ulvan degradation. Ulvan is the main polysaccharide component of the Ulvales (green seaweed) cell wall. It is composed of disaccharide building blocks comprising 3-sulfated rhamnose (Rha3S) linked to D-glucuronic acid (GlcA), L-iduronic acid (IduA), or D-xylose (Xyl). Ulvan lyase catalyzes preferentially the endolytic cleavage of the glycosidic bond between Rha3S and the uronic acid GlcA, but not IduA, producing oligosaccharides that have unsaturated 4-deoxy-L-threo-hex-4-enopyranosiduronic acid (deltaUA) at the non-reducing end. The most abundant end products in the degradation of the ulvan polysaccharide were deltaUA-Rha3S disaccharides and deltaUA-Rha3S-IduA-Rha3S and deltaUA-Rha3S-Xyl-Rha3S tetrasaccharides. The sequence is that of Ulvan lyase, long isoform from Alteromonas sp. (strain LOR).